The sequence spans 324 residues: Cyclin-dependent kinase 1 (324 aa).

One can recognise a Protein kinase domain in the interval 4-307; sequence YQKIEKIGEG…AKQACMHPYF (304 aa). ATP-binding positions include 10–18 and lysine 34; that span reads IGEGTYGVV. Threonine 14 carries the phosphothreonine modification. Residue tyrosine 15 is modified to Phosphotyrosine. Aspartate 148 serves as the catalytic Proton acceptor. Residue threonine 181 is modified to Phosphothreonine; by CAK.

Belongs to the protein kinase superfamily. CMGC Ser/Thr protein kinase family. CDC2/CDKX subfamily. As to quaternary structure, forms a stable but non-covalent complex with a regulatory subunit (SUC1) and with a cyclin.

It catalyses the reaction L-seryl-[protein] + ATP = O-phospho-L-seryl-[protein] + ADP + H(+). The enzyme catalyses L-threonyl-[protein] + ATP = O-phospho-L-threonyl-[protein] + ADP + H(+). Phosphorylation at Thr-14 or Tyr-15 inactivates the enzyme, while phosphorylation at Thr-181 activates it. Its function is as follows. Cyclin-dependent kinase that acts as a master regulator of the mitotic and meiotic cell cycles. This chain is Cyclin-dependent kinase 1, found in Ajellomyces capsulatus (Darling's disease fungus).